A 142-amino-acid polypeptide reads, in one-letter code: Large ribosomal subunit protein uL11 (142 aa).

This sequence belongs to the universal ribosomal protein uL11 family. As to quaternary structure, part of the ribosomal stalk of the 50S ribosomal subunit. Interacts with L10 and the large rRNA to form the base of the stalk. L10 forms an elongated spine to which L12 dimers bind in a sequential fashion forming a multimeric L10(L12)X complex. Post-translationally, one or more lysine residues are methylated.

In terms of biological role, forms part of the ribosomal stalk which helps the ribosome interact with GTP-bound translation factors. The sequence is that of Large ribosomal subunit protein uL11 from Mycobacterium sp. (strain MCS).